The following is a 2381-amino-acid chain: Nipped-B-like protein A (2381 aa).

An HEAT 1 repeat occupies 85–124; the sequence is SDELEGDVPVLLQLLMSRNPNIFRNKTAPNTPQYPAQAGI. 3 disordered regions span residues 131–211, 240–289, and 329–503; these read PPYK…HLQQ, HLLQ…DIVG, and LAAI…ELPP. Residues 138 to 158 are compositionally biased toward polar residues; it reads GSMQGSPASANYQQASMSHSP. Composition is skewed to basic and acidic residues over residues 254–273 and 333–355; these read GTKD…KSSE and ERME…DKDK. Residues 373–389 show a composition bias toward gly residues; sequence GTAGSGSGAPGGGGGAN. Positions 451–473 are enriched in basic and acidic residues; sequence VKHEHDHDPEHPHYDDKQPDTPR. The PxVxL motif motif lies at 552 to 565; the sequence is KKSVKPVVVLQKLS. Over residues 570 to 580 the composition is skewed to basic and acidic residues; sequence QRLMRERDSRA. Disordered stretches follow at residues 570–604 and 629–708; these read QRLM…SVLK and RKRS…NEVA. Over residues 581–592 the composition is skewed to polar residues; it reads SKSGKNRLSSGR. Basic and acidic residues-rich tracts occupy residues 633 to 642 and 658 to 694; these read TVNERPKYAE and KDRD…RYDD. HEAT repeat units lie at residues 1299–1337, 1375–1413, 1477–1516, and 1843–1881; these read SQSF…VDPS, PQLT…EQPN, YDWF…HILK, and LIHP…KYTG. Disordered regions lie at residues 2005-2095 and 2228-2271; these read IPGR…DLDD and LLGG…GDSA. A compositionally biased stretch (basic residues) spans 2006–2021; it reads PGRKSRKRRRRRRRPQ. Positions 2040–2056 are enriched in basic and acidic residues; sequence EEERGAQDEERERHSGD. Residues 2057–2068 show a composition bias toward acidic residues; the sequence is EEYDDDDYEEDE. Positions 2077-2086 are enriched in basic and acidic residues; that stretch reads KPTEDIRQSE.

The protein belongs to the SCC2/Nipped-B family.

It is found in the nucleus. May play a structural role in chromatin. Involved in sister chromatid cohesion, possibly by facilitating the cohesin complex loading. Transcription factor, which may promote cortical neuron migration during brain development by regulating the transcription of crucial genes in this process. The polypeptide is Nipped-B-like protein A (nipbla) (Danio rerio (Zebrafish)).